Reading from the N-terminus, the 345-residue chain is S-adenosylmethionine:tRNA ribosyltransferase-isomerase (345 aa).

This sequence belongs to the QueA family. Monomer.

The protein localises to the cytoplasm. The enzyme catalyses 7-aminomethyl-7-carbaguanosine(34) in tRNA + S-adenosyl-L-methionine = epoxyqueuosine(34) in tRNA + adenine + L-methionine + 2 H(+). Its pathway is tRNA modification; tRNA-queuosine biosynthesis. Transfers and isomerizes the ribose moiety from AdoMet to the 7-aminomethyl group of 7-deazaguanine (preQ1-tRNA) to give epoxyqueuosine (oQ-tRNA). This chain is S-adenosylmethionine:tRNA ribosyltransferase-isomerase, found in Shewanella baltica (strain OS155 / ATCC BAA-1091).